A 293-amino-acid polypeptide reads, in one-letter code: Serine/threonine-protein phosphatase 2A catalytic subunit beta isoform (293 aa).

Positions 41, 43, 69, and 101 each coordinate Mn(2+). The active-site Proton donor is the His-102. Positions 151 and 225 each coordinate Mn(2+). Tyr-291 is subject to Phosphotyrosine. The residue at position 293 (Leu-293) is a Leucine methyl ester.

The protein belongs to the PPP phosphatase family. PP-1 subfamily. Found in a complex with at least ARL2, PPP2CB, PPP2R1A, PPP2R2A, PPP2R5E and TBCD. Interacts with TBCD. PP2A consists of a common heterodimeric core enzyme (composed of a 36 kDa catalytic subunit (subunit C) and a 65 kDa constant regulatory subunit (PR65) (subunit A)) that associates with a variety of regulatory subunits. Proteins that associate with the core dimer include three families of regulatory subunits B (the R2/B/PR55/B55, R3/B''/PR72/PR130/PR59 and R5/B'/B56 families), the 48 kDa variable regulatory subunit, viral proteins, and cell signaling molecules. Binds PPME1. May indirectly interact with SGO1, most probably through regulatory B56 subunits. Interacts with CTTNBP2NL. Interacts with PTPA. Part of the core of STRIPAK complexes composed of PP2A catalytic and scaffolding subunits, the striatins (PP2A regulatory subunits), the striatin-associated proteins MOB4, STRIP1 and STRIP2, PDCD10 and members of the STE20 kinases, such as STK24 and STK26. It depends on Mn(2+) as a cofactor. Post-translationally, reversibly methyl esterified on Leu-293 by leucine carboxyl methyltransferase 1 (Lcmt1) and protein phosphatase methylesterase 1 (PPME1). Carboxyl methylation influences the affinity of the catalytic subunit for the different regulatory subunits, thereby modulating the PP2A holoenzyme's substrate specificity, enzyme activity and cellular localization. Phosphorylation of either threonine (by autophosphorylation-activated protein kinase) or tyrosine results in inactivation of the phosphatase. Auto-dephosphorylation has been suggested as a mechanism for reactivation. In terms of processing, may be monoubiquitinated by NOSIP.

It localises to the cytoplasm. It is found in the nucleus. The protein resides in the chromosome. Its subcellular location is the centromere. The protein localises to the cytoskeleton. It localises to the spindle pole. It catalyses the reaction O-phospho-L-seryl-[protein] + H2O = L-seryl-[protein] + phosphate. The enzyme catalyses O-phospho-L-threonyl-[protein] + H2O = L-threonyl-[protein] + phosphate. Catalytic subunit of protein phosphatase 2A (PP2A), a serine/threonine phosphatase involved in the regulation of a wide variety of enzymes, signal transduction pathways, and cellular events. PP2A can modulate the activity of phosphorylase B kinase, casein kinase 2, mitogen-stimulated S6 kinase, and MAP-2 kinase. Part of the striatin-interacting phosphatase and kinase (STRIPAK) complexes. STRIPAK complexes have critical roles in protein (de)phosphorylation and are regulators of multiple signaling pathways including Hippo, MAPK, nuclear receptor and cytoskeleton remodeling. Different types of STRIPAK complexes are involved in a variety of biological processes such as cell growth, differentiation, apoptosis, metabolism and immune regulation. This is Serine/threonine-protein phosphatase 2A catalytic subunit beta isoform (PPP2CB) from Sus scrofa (Pig).